Consider the following 242-residue polypeptide: uncharacterized protein (242 aa).

The first 20 residues, 1 to 20 (MTFIKGLPLMLLTISLGCNA), serve as a signal peptide directing secretion.

Belongs to the periplasmic pilus chaperone family.

The protein resides in the periplasm. Could be required for the biogenesis of the putative YbgD fimbria. This is an uncharacterized protein from Escherichia coli (strain K12).